The primary structure comprises 265 residues: U6 snRNA phosphodiesterase 1 (265 aa).

The segment at 1-22 (MSLVCYESSSSGEDDDETISDN) is disordered. Residue H109 is the Proton acceptor of the active site. Residues 109 to 111 (HLS) and 195 to 201 (DFLLHIS) contribute to the AMP site. 197-201 (LLHIS) is a UMP binding site. H199 functions as the Proton donor in the catalytic mechanism.

The protein belongs to the 2H phosphoesterase superfamily. USB1 family.

The protein localises to the nucleus. It catalyses the reaction a 3'-end uridylyl-uridine-RNA = a 3'-end 2',3'-cyclophospho-uridine-RNA + uridine. In terms of biological role, 3'-5' RNA exonuclease that trims the 3' end of oligo(U) tracts of the pre-U6 small nuclear RNA (snRNA) molecule, leading to the formation of a U6 snRNA 3' end-terminated with a 2',3'-cyclic phosphate.d. Participates in the U6 snRNA 3' end processing that prevents U6 snRNA degradation. The chain is U6 snRNA phosphodiesterase 1 from Schizosaccharomyces pombe (strain 972 / ATCC 24843) (Fission yeast).